The following is a 526-amino-acid chain: Probable feruloyl esterase B-2 (526 aa).

Residues M1–A18 form the signal peptide. Cystine bridges form between C27–C74 and C62–C113. N-linked (GlcNAc...) asparagine glycosylation is present at N52. N-linked (GlcNAc...) asparagine glycosylation occurs at N137. 4 cysteine pairs are disulfide-bonded: C186-C441, C255-C272, C281-C291, and C503-C525. Catalysis depends on S187, which acts as the Acyl-ester intermediate. N233 is a glycosylation site (N-linked (GlcNAc...) asparagine). 5 residues coordinate Ca(2+): D256, D259, A261, D263, and I265. Catalysis depends on charge relay system residues D400 and H440. The N-linked (GlcNAc...) asparagine glycan is linked to N516.

This sequence belongs to the tannase family.

The protein localises to the secreted. It catalyses the reaction feruloyl-polysaccharide + H2O = ferulate + polysaccharide.. Involved in degradation of plant cell walls. Hydrolyzes the feruloyl-arabinose ester bond in arabinoxylans as well as the feruloyl-galactose and feruloyl-arabinose ester bonds in pectin. The sequence is that of Probable feruloyl esterase B-2 (faeB-2) from Aspergillus fumigatus (strain ATCC MYA-4609 / CBS 101355 / FGSC A1100 / Af293) (Neosartorya fumigata).